Here is a 511-residue protein sequence, read N- to C-terminus: Glucose-1-phosphate adenylyltransferase large subunit 1, chloroplastic/amyloplastic (511 aa).

Residues 1–58 (MAAMDLRVAAPASVAAAARCGTSLARPWPARAVGGGGGGGGRGRRLSVRTSVATTEAA) constitute a chloroplast transit peptide.

The protein belongs to the bacterial/plant glucose-1-phosphate adenylyltransferase family. Heterotetramer composed of two small and two large subunits. Expressed in leaves and stems.

It localises to the plastid. The protein localises to the chloroplast. Its subcellular location is the amyloplast. It catalyses the reaction alpha-D-glucose 1-phosphate + ATP + H(+) = ADP-alpha-D-glucose + diphosphate. Its pathway is glycan biosynthesis; starch biosynthesis. Activated by 3'phosphoglycerate, inhibited by orthophosphate. Allosteric regulation. Involved in synthesis of starch. Catalyzes the synthesis of ADP-glucose, a molecule that serves as an activated glycosyl donor for alpha-1,4-glucan synthesis. Essential for starch synthesis in leaf chloroplasts and endosperm amyloplasts. This is Glucose-1-phosphate adenylyltransferase large subunit 1, chloroplastic/amyloplastic from Oryza sativa subsp. japonica (Rice).